The sequence spans 397 residues: Elongation factor Tu (397 aa).

A tr-type G domain is found at 10 to 207; the sequence is LPHCNVGTIG…TLDSYIPQPE (198 aa). A G1 region spans residues 19–26; that stretch reads GHVDHGKT. GTP is bound at residue 19 to 26; sequence GHVDHGKT. Mg(2+) is bound at residue Thr-26. Positions 60-64 are G2; that stretch reads GITIN. Residues 81 to 84 are G3; sequence DCPG. GTP is bound by residues 81–85 and 136–139; these read DCPGH and NKAD. Residues 136–139 form a G4 region; it reads NKAD. A G5 region spans residues 174-176; the sequence is SAR.

It belongs to the TRAFAC class translation factor GTPase superfamily. Classic translation factor GTPase family. EF-Tu/EF-1A subfamily. As to quaternary structure, monomer.

It localises to the cytoplasm. It catalyses the reaction GTP + H2O = GDP + phosphate + H(+). Its function is as follows. GTP hydrolase that promotes the GTP-dependent binding of aminoacyl-tRNA to the A-site of ribosomes during protein biosynthesis. In Pseudomonas syringae pv. tomato (strain ATCC BAA-871 / DC3000), this protein is Elongation factor Tu.